The chain runs to 308 residues: tRNA dimethylallyltransferase 1 (308 aa).

9–16 (GPTGVGKT) serves as a coordination point for ATP. Position 11-16 (11-16 (TGVGKT)) interacts with substrate. The tract at residues 34-37 (DSRQ) is interaction with substrate tRNA.

It belongs to the IPP transferase family. Monomer. The cofactor is Mg(2+).

The catalysed reaction is adenosine(37) in tRNA + dimethylallyl diphosphate = N(6)-dimethylallyladenosine(37) in tRNA + diphosphate. In terms of biological role, catalyzes the transfer of a dimethylallyl group onto the adenine at position 37 in tRNAs that read codons beginning with uridine, leading to the formation of N6-(dimethylallyl)adenosine (i(6)A). The protein is tRNA dimethylallyltransferase 1 of Bacteroides thetaiotaomicron (strain ATCC 29148 / DSM 2079 / JCM 5827 / CCUG 10774 / NCTC 10582 / VPI-5482 / E50).